The following is a 122-amino-acid chain: Large ribosomal subunit protein bL12 (122 aa).

This sequence belongs to the bacterial ribosomal protein bL12 family. In terms of assembly, homodimer. Part of the ribosomal stalk of the 50S ribosomal subunit. Forms a multimeric L10(L12)X complex, where L10 forms an elongated spine to which 2 to 4 L12 dimers bind in a sequential fashion. Binds GTP-bound translation factors.

In terms of biological role, forms part of the ribosomal stalk which helps the ribosome interact with GTP-bound translation factors. Is thus essential for accurate translation. The polypeptide is Large ribosomal subunit protein bL12 (Staphylococcus aureus (strain Newman)).